The sequence spans 297 residues: Myozenin-1 (297 aa).

The disordered stretch occupies residues 1 to 34 (MPLSGTPAPNKKRKSSKLIMELTGGGQESSGLNL). Position 82 is a phosphoserine (serine 82). The disordered stretch occupies residues 105–172 (FSYSKSSGGG…ALPDNQAGGE (68 aa)). Residues 118-128 (RSGSAGQYGSD) are compositionally biased toward low complexity. The span at 136–162 (SGSGSGSGSGPGSGGAGGPGGHSGRGG) shows a compositional bias: gly residues.

The protein belongs to the myozenin family. As to quaternary structure, interacts with ACTN2, ACTN3, FLNA, FLNB, FLNC, LDB3, PPP3CA and TCAP. Interacts via its C-terminal region with MYOT.

It is found in the nucleus. The protein localises to the cell projection. The protein resides in the pseudopodium. Myozenins may serve as intracellular binding proteins involved in linking Z-disk proteins such as alpha-actinin, gamma-filamin, TCAP/telethonin, LDB3/ZASP and localizing calcineurin signaling to the sarcomere. Plays an important role in the modulation of calcineurin signaling. May play a role in myofibrillogenesis. The chain is Myozenin-1 (MYOZ1) from Bos taurus (Bovine).